A 771-amino-acid polypeptide reads, in one-letter code: Carnitine O-palmitoyltransferase 1, muscle isoform (771 aa).

Residues 1–47 lie on the Cytoplasmic side of the membrane; sequence MAEAHQAVAFQFTVTPEGVDFQLSREVLKHIYLSVIRSWKKRLIRIK. A helical transmembrane segment spans residues 48-73; it reads NGILRGVYPGSPTSWLVVVMATAGSS. Topologically, residues 74–101 are mitochondrial intermembrane; the sequence is YYNVDISMGLVYYIQRWLPEGRPYRTPY. Residues 102–121 traverse the membrane as a helical segment; sequence TRTLFSMAIFSTGVWMMGIF. Residues 122–771 lie on the Cytoplasmic side of the membrane; that stretch reads FFRQTLKLLL…NLFQVPKADG (650 aa). The active-site Proton acceptor is H472. 554–566 serves as a coordination point for CoA; sequence GKGLIKKCRTSPD. Residues Y588 and T601 each coordinate (R)-carnitine.

It belongs to the carnitine/choline acetyltransferase family.

The protein resides in the mitochondrion outer membrane. It carries out the reaction (R)-carnitine + hexadecanoyl-CoA = O-hexadecanoyl-(R)-carnitine + CoA. It participates in lipid metabolism; fatty acid beta-oxidation. Its function is as follows. Catalyzes the transfer of the acyl group of long-chain fatty acid-CoA conjugates onto carnitine, an essential step for the mitochondrial uptake of long-chain fatty acids and their subsequent beta-oxidation in the mitochondrion. The sequence is that of Carnitine O-palmitoyltransferase 1, muscle isoform (CPT1B) from Bos taurus (Bovine).